The sequence spans 438 residues: Ubiquitin carboxyl-terminal hydrolase 27 (438 aa).

A USP domain is found at 78–421 (RGLINLGNTC…EGYLLFYHKQ (344 aa)). The Nucleophile role is filled by C87. H380 (proton acceptor) is an active-site residue.

This sequence belongs to the peptidase C19 family. Interacts with phosphorylated BCL2L11 isoform BIMEL; this interaction leads to BCL2L11 deubiquitination and stabilization.

The protein localises to the cytoplasm. Its subcellular location is the cytosol. It localises to the nucleus. The catalysed reaction is Thiol-dependent hydrolysis of ester, thioester, amide, peptide and isopeptide bonds formed by the C-terminal Gly of ubiquitin (a 76-residue protein attached to proteins as an intracellular targeting signal).. In terms of biological role, deubiquitinase involved in innate antiviral immunity by mediating deubiquitination of CGAS and RIGI. Negatively regulates RIGI by mediating 'Lys-63'-linked deubiquitination of RIGI, inhibiting type I interferon signaling. Also regulates 'Lys-63'-linked ubiquitination level of MDA5/IFIH1. Acts as a positive regulator of the cGAS-STING pathway by catalyzing 'Lys-48'-linked deubiquitination of CGAS, thereby promoting its stabilization. Can reduce the levels of BCL2L11/BIM ubiquitination and stabilize BCL2L11 in response to the RAF-MAPK-degradation signal. By acting on BCL2L11 levels, may counteract the anti-apoptotic effects of MAPK activity. The protein is Ubiquitin carboxyl-terminal hydrolase 27 of Homo sapiens (Human).